The primary structure comprises 398 residues: Steroid C26-monooxygenase (398 aa).

Cys-340 is a binding site for heme.

The protein belongs to the cytochrome P450 family. The cofactor is heme.

It catalyses the reaction cholest-4-en-3-one + 6 reduced [2Fe-2S]-[ferredoxin] + 3 O2 + 5 H(+) = (25R)-3-oxocholest-4-en-26-oate + 6 oxidized [2Fe-2S]-[ferredoxin] + 4 H2O. The enzyme catalyses cholest-4-en-3-one + 2 reduced [2Fe-2S]-[ferredoxin] + O2 + 2 H(+) = (25R)-3-oxocholest-4-en-26-ol + 2 oxidized [2Fe-2S]-[ferredoxin] + H2O. The catalysed reaction is (25R)-3-oxocholest-4-en-26-ol + 2 reduced [2Fe-2S]-[ferredoxin] + O2 + 2 H(+) = (25R)-3-oxocholest-4-en-26-al + 2 oxidized [2Fe-2S]-[ferredoxin] + 2 H2O. It carries out the reaction (25R)-3-oxocholest-4-en-26-al + 2 reduced [2Fe-2S]-[ferredoxin] + O2 + H(+) = (25R)-3-oxocholest-4-en-26-oate + 2 oxidized [2Fe-2S]-[ferredoxin] + H2O. It catalyses the reaction cholesterol + NADPH + O2 + H(+) = 26-hydroxycholesterol + NADP(+) + H2O. The enzyme catalyses 26-hydroxycholesterol + 2 reduced [2Fe-2S]-[ferredoxin] + O2 + 2 H(+) = (3beta)-hydroxy-cholest-5-en-26-al + 2 oxidized [2Fe-2S]-[ferredoxin] + 2 H2O. The catalysed reaction is (3beta)-hydroxy-cholest-5-en-26-al + NADPH + O2 = (3beta)-hydroxy-cholest-5-en-26-oate + NADP(+) + H2O. It carries out the reaction (25S)-3-oxocholest-4-en-26-ol + 2 reduced [2Fe-2S]-[ferredoxin] + O2 + 2 H(+) = (25S)-3-oxocholest-4-en-26-al + 2 oxidized [2Fe-2S]-[ferredoxin] + 2 H2O. It catalyses the reaction (25S)-3-oxocholest-4-en-26-al + 2 reduced [2Fe-2S]-[ferredoxin] + O2 + H(+) = (25S)-3-oxocholest-4-en-26-oate + 2 oxidized [2Fe-2S]-[ferredoxin] + H2O. It functions in the pathway steroid metabolism; cholesterol degradation. Its activity is regulated as follows. Inhibited by econazole, clotrimazole and miconazole. Involved in the utilization of cholesterol as the sole carbon and energy source by degrading the side chain during infection. Primarily catalyzes the sequential oxidation of the terminal methyl of cholest-4-en-3-one into (25R)-26-hydroxycholest-4-en-3-one (alcohol), (25R)-26-oxocholest-4-en-3-one (aldehyde), to finally yield the carboxylic acid (25R)-3-oxocholest-4-en-26-oate. In vitro, Cyp142 catalyzes with equal preference the oxidation of both (25R)- and (25S)-26-hydroxycholest-4-en-3-one diastereomers to the corresponding carboxylic acid which is a prerequisite for entry into the beta-oxidation pathway. Also able to sequentially oxidize cholesterol itself, not only cholest-4-en-3-one. The protein is Steroid C26-monooxygenase (cyp142) of Mycobacterium tuberculosis (strain ATCC 25618 / H37Rv).